The following is a 472-amino-acid chain: 3-isopropylmalate dehydratase large subunit (472 aa).

Positions 353, 414, and 417 each coordinate [4Fe-4S] cluster.

The protein belongs to the aconitase/IPM isomerase family. LeuC type 1 subfamily. As to quaternary structure, heterodimer of LeuC and LeuD. The cofactor is [4Fe-4S] cluster.

The catalysed reaction is (2R,3S)-3-isopropylmalate = (2S)-2-isopropylmalate. It functions in the pathway amino-acid biosynthesis; L-leucine biosynthesis; L-leucine from 3-methyl-2-oxobutanoate: step 2/4. Its function is as follows. Catalyzes the isomerization between 2-isopropylmalate and 3-isopropylmalate, via the formation of 2-isopropylmaleate. In Acinetobacter baumannii (strain ACICU), this protein is 3-isopropylmalate dehydratase large subunit.